The following is a 570-amino-acid chain: Ferroportin (570 aa).

Residues 1 to 23 (MTKARDQTHQEGCCGSLANYLTS) lie on the Cytoplasmic side of the membrane. A helical membrane pass occupies residues 24–53 (AKFLLYLGHSLSTWGDRMWHFAVSVFLVEL). Fe cation-binding residues include D39 and H43. The Extracellular portion of the chain corresponds to 54 to 57 (YGNS). The helical transmembrane segment at 58 to 84 (LLLTAVYGLVVAGSVLVLGAIIGDWVD) threads the bilayer. Residues 85 to 87 (KNA) lie on the Cytoplasmic side of the membrane. Residues 88–118 (RLKVAQTSLVVQNVSVILCGIILMMVFLHKN) form a helical membrane-spanning segment. Residues 119 to 126 (ELLTMYHG) lie on the Extracellular side of the membrane. Residues 127–162 (WVLTVCYILIITIANIANLASTATAITIQRDWIVVV) traverse the membrane as a helical segment. Residues 163–164 (AG) are Cytoplasmic-facing. A helical transmembrane segment spans residues 165–195 (ENRSRLADMNATIRRIDQLTNILAPMAVGQI). The Extracellular segment spans residues 196–202 (MTFGSPV). The chain crosses the membrane as a helical span at residues 203 to 229 (IGCGFISGWNLVSMCVEYFLLWKVYQK). The Cytoplasmic portion of the chain corresponds to 230–306 (TPALAVKAAL…DGWVSYYNQP (77 aa)). Residues 307–333 (VFLAGMGLAFLYMTVLGFDCITTGYAY) form a helical membrane-spanning segment. C326 lines the Fe cation pocket. The Extracellular segment spans residues 334–338 (TQGLS). The helical transmembrane segment at 339-366 (GSILSILMGASAITGIMGTVAFTWLRRK) threads the bilayer. The Cytoplasmic portion of the chain corresponds to 367 to 368 (CG). The helical transmembrane segment at 369 to 391 (LVRTGLFSGLAQLSCLILCVISV) threads the bilayer. Over 392-452 (FMPGSPLDLS…EMSTKPIPIV (61 aa)) the chain is Extracellular. The N-linked (GlcNAc...) asparagine glycan is linked to N437. A helical membrane pass occupies residues 453-482 (SVSLLFAGVIAARIGLWSFDLTVTQLLQEN). Residues 483-487 (VIESE) lie on the Cytoplasmic side of the membrane. A helical transmembrane segment spans residues 488 to 512 (RGIINGVQNSMNYLLDLLHFIMVIL). H506 contacts Fe cation. The Extracellular segment spans residues 513–515 (APN). Residues 516-541 (PEAFGLLVLISVSFVAMGHLMYFRFA) form a helical membrane-spanning segment. At 542–570 (QKTLGNQIFVCGPDEKEVTDENQPNTSVV) the chain is on the cytoplasmic side.

The protein belongs to the ferroportin (FP) (TC 2.A.100) family. SLC40A subfamily. Identified in a complex with STOM. Interacts with HAMP; affinity of the peptide hormone HAMP for SLC40A1 increases by 80-fold in the presence of iron and the interaction promotes SLC40A1 ubiquitination and degradation. Part of a complex composed of SLC40A1/ferroportin, TF/transferrin and HEPH/hephaestin that transfers iron from cells to transferrin. In terms of processing, polyubiquitinated by RNF217; leading to proteasomal degradation. Under conditions of high systemic iron levels, both the hormone peptide hepcidin/HAMP and holo(iron bound)-transferrin/TF induce the ubiquitination, internalization and proteasomal degradation of SLC40A1 to control iron release from cells. High expression in spleen, liver, kidney, heart and duodenum.

It is found in the cell membrane. Its subcellular location is the basolateral cell membrane. It catalyses the reaction Fe(2+)(in) = Fe(2+)(out). Functionally, transports Fe(2+) from the inside of a cell to the outside of the cell, playing a key role for maintaining systemic iron homeostasis. Transports iron from intestinal, splenic, hepatic cells, macrophages and erythrocytes into the blood to provide iron to other tissues. Controls therefore dietary iron uptake, iron recycling by macrophages and erythrocytes, and release of iron stores in hepatocytes. When iron is in excess in serum, circulating HAMP/hepcidin levels increase resulting in a degradation of SLC40A1, thus limiting the iron efflux to plasma. This is Ferroportin from Mus musculus (Mouse).